Here is a 935-residue protein sequence, read N- to C-terminus: uncharacterized protein (935 aa).

Disordered regions lie at residues 1-32 (MDIGLITNKEDDEENDLSIKSPYSTTKNQNNN), 74-228 (NNNN…YNNG), 265-287 (NNENKKKNNDNENNNYPNFNNNN), 342-376 (NQQKHQKKIQHQENSNFEQLEKPEQLSHNSESSKT), 394-414 (SPTQQQQQQQQQQQQQQQQQY), 466-491 (KNINNNNSNNNNNNNNNNNNNNNNNI), 516-559 (PHQQ…TSTI), 727-755 (SPSSSTSSETTTSTSTTTNNTSTTTISPS), and 778-799 (GGGSSGGGGSGGGVNNNNNVQN). Residues 74 to 227 (NNNNNTTNNN…NNNDDNIYNN (154 aa)) are compositionally biased toward low complexity. Positions 262-331 (KKNNNENKKK…NNINNNNNKI (70 aa)) form a coiled coil. Residues 265-274 (NNENKKKNND) show a composition bias toward basic and acidic residues. A compositionally biased stretch (low complexity) spans 275–287 (NENNNYPNFNNNN). Residues 367-376 (LSHNSESSKT) are compositionally biased toward polar residues. Low complexity predominate over residues 397–414 (QQQQQQQQQQQQQQQQQY). A compositionally biased stretch (low complexity) spans 522-559 (SSPTSSSTSTSSTTSSSSSSSSSSSSSSSSSTSSTSTI). Positions 778-791 (GGGSSGGGGSGGGV) are enriched in gly residues.

This is an uncharacterized protein from Dictyostelium discoideum (Social amoeba).